Here is a 92-residue protein sequence, read N- to C-terminus: NELL2-interacting cell ontogeny regulator 1 (92 aa).

An N-terminal signal peptide occupies residues 1–30 (MALPSAWSVMRVVIPFISVLGLLGVRLVGA).

This sequence belongs to the NICOL family.

The protein localises to the secreted. Its subcellular location is the cytoplasm. It localises to the perinuclear region. In terms of biological role, mRNA-binding protein which interacts with a range of target mRNAs and may promote extracellular matrix production. May function as a component of lumicrine signaling and may play a crucial role in epididymal-mediated sperm maturation and male fertility. This Gallus gallus (Chicken) protein is NELL2-interacting cell ontogeny regulator 1.